Consider the following 252-residue polypeptide: 3-dehydroquinate dehydratase (252 aa).

3-dehydroquinate contacts are provided by residues Ser-21, 46–48 (EWR), and Arg-82. His-143 serves as the catalytic Proton donor/acceptor. Lys-170 acts as the Schiff-base intermediate with substrate in catalysis. The 3-dehydroquinate site is built by Arg-213, Ser-232, and Gln-236.

It belongs to the type-I 3-dehydroquinase family. As to quaternary structure, homodimer.

The enzyme catalyses 3-dehydroquinate = 3-dehydroshikimate + H2O. It participates in metabolic intermediate biosynthesis; chorismate biosynthesis; chorismate from D-erythrose 4-phosphate and phosphoenolpyruvate: step 3/7. Its function is as follows. Involved in the third step of the chorismate pathway, which leads to the biosynthesis of aromatic amino acids. Catalyzes the cis-dehydration of 3-dehydroquinate (DHQ) and introduces the first double bond of the aromatic ring to yield 3-dehydroshikimate. The chain is 3-dehydroquinate dehydratase from Escherichia coli O6:K15:H31 (strain 536 / UPEC).